The following is a 184-amino-acid chain: Probable RNA 2'-phosphotransferase (184 aa).

This sequence belongs to the KptA/TPT1 family.

Functionally, removes the 2'-phosphate from RNA via an intermediate in which the phosphate is ADP-ribosylated by NAD followed by a presumed transesterification to release the RNA and generate ADP-ribose 1''-2''-cyclic phosphate (APPR&gt;P). May function as an ADP-ribosylase. The sequence is that of Probable RNA 2'-phosphotransferase from Rhodopirellula baltica (strain DSM 10527 / NCIMB 13988 / SH1).